Consider the following 156-residue polypeptide: MPRRGPVPKRDVLPDPIYGSKLVTKLINKTMVDGKKSLAEKICYRAFDIIREKTGRDPLEVFEEAMKNVMPVLEVRPRRVGGANYQVPVEVRPERRQSLAIRWIVNYARERNGRSMEEKLAAEIMDAANGVGGAVKKKEDTHKMAEANKAFAHYRW.

This sequence belongs to the universal ribosomal protein uS7 family. As to quaternary structure, part of the 30S ribosomal subunit. Contacts proteins S9 and S11.

One of the primary rRNA binding proteins, it binds directly to 16S rRNA where it nucleates assembly of the head domain of the 30S subunit. Is located at the subunit interface close to the decoding center, probably blocks exit of the E-site tRNA. The chain is Small ribosomal subunit protein uS7 from Carboxydothermus hydrogenoformans (strain ATCC BAA-161 / DSM 6008 / Z-2901).